A 209-amino-acid polypeptide reads, in one-letter code: Peroxynitrite isomerase 2 (209 aa).

The GXWXGXG motif lies at 56 to 62 (GVWRGEG). Positions 172 and 199 each coordinate heme b.

This sequence belongs to the nitrobindin family. Homodimer. Heme b serves as cofactor.

It carries out the reaction peroxynitrite = nitrate. The protein operates within nitrogen metabolism. Its function is as follows. Heme-binding protein able to scavenge peroxynitrite and to protect free L-tyrosine against peroxynitrite-mediated nitration, by acting as a peroxynitrite isomerase that converts peroxynitrite to nitrate. Therefore, this protein likely plays a role in peroxynitrite sensing and in the detoxification of reactive nitrogen and oxygen species (RNS and ROS, respectively). Is able to bind nitric oxide (NO) in vitro, but may act as a sensor of peroxynitrite levels in vivo. This Mycolicibacterium gilvum (strain PYR-GCK) (Mycobacterium gilvum (strain PYR-GCK)) protein is Peroxynitrite isomerase 2.